The sequence spans 253 residues: Imidazole glycerol phosphate synthase subunit HisF (253 aa).

Active-site residues include D11 and D130.

This sequence belongs to the HisA/HisF family. As to quaternary structure, heterodimer of HisH and HisF.

It localises to the cytoplasm. It catalyses the reaction 5-[(5-phospho-1-deoxy-D-ribulos-1-ylimino)methylamino]-1-(5-phospho-beta-D-ribosyl)imidazole-4-carboxamide + L-glutamine = D-erythro-1-(imidazol-4-yl)glycerol 3-phosphate + 5-amino-1-(5-phospho-beta-D-ribosyl)imidazole-4-carboxamide + L-glutamate + H(+). It functions in the pathway amino-acid biosynthesis; L-histidine biosynthesis; L-histidine from 5-phospho-alpha-D-ribose 1-diphosphate: step 5/9. In terms of biological role, IGPS catalyzes the conversion of PRFAR and glutamine to IGP, AICAR and glutamate. The HisF subunit catalyzes the cyclization activity that produces IGP and AICAR from PRFAR using the ammonia provided by the HisH subunit. The chain is Imidazole glycerol phosphate synthase subunit HisF from Thermoanaerobacter sp. (strain X514).